The chain runs to 138 residues: ATP synthase epsilon chain (138 aa).

It belongs to the ATPase epsilon chain family. F-type ATPases have 2 components, CF(1) - the catalytic core - and CF(0) - the membrane proton channel. CF(1) has five subunits: alpha(3), beta(3), gamma(1), delta(1), epsilon(1). CF(0) has three main subunits: a, b and c.

The protein localises to the cell inner membrane. Produces ATP from ADP in the presence of a proton gradient across the membrane. The sequence is that of ATP synthase epsilon chain from Ruthia magnifica subsp. Calyptogena magnifica.